The primary structure comprises 162 residues: Transcription elongation factor GreA (162 aa).

Residues 44-72 (ENAEYHAAKEKQSHIERRIAELSDILSRA) adopt a coiled-coil conformation.

Belongs to the GreA/GreB family.

Functionally, necessary for efficient RNA polymerase transcription elongation past template-encoded arresting sites. The arresting sites in DNA have the property of trapping a certain fraction of elongating RNA polymerases that pass through, resulting in locked ternary complexes. Cleavage of the nascent transcript by cleavage factors such as GreA or GreB allows the resumption of elongation from the new 3'terminus. GreA releases sequences of 2 to 3 nucleotides. In Nautilia profundicola (strain ATCC BAA-1463 / DSM 18972 / AmH), this protein is Transcription elongation factor GreA.